The sequence spans 117 residues: Large ribosomal subunit protein bL20 (117 aa).

Belongs to the bacterial ribosomal protein bL20 family.

Functionally, binds directly to 23S ribosomal RNA and is necessary for the in vitro assembly process of the 50S ribosomal subunit. It is not involved in the protein synthesizing functions of that subunit. This Aliivibrio fischeri (strain ATCC 700601 / ES114) (Vibrio fischeri) protein is Large ribosomal subunit protein bL20.